Reading from the N-terminus, the 527-residue chain is Tyrosine-protein kinase TXK (527 aa).

Residues 35–79 (DEELPEKYTQRRRPWLSQLSNKKQSNTGRVQPSKRKPLPPLPPSE) form a disordered region. Polar residues predominate over residues 51–64 (SQLSNKKQSNTGRV). The short motif at 68 to 73 (KRKPLP) is the Nuclear localization signal element. Positions 82–142 (EEKIQVKALY…PSNYVTENKI (61 aa)) constitute an SH3 domain. Phosphotyrosine; by autocatalysis is present on tyrosine 91. The SH2 domain maps to 150-246 (WYHRNITRNQ…GLMTRLRYPV (97 aa)). A Protein kinase domain is found at 271 to 527 (LAFIKEIGSG…RAVTEIAETW (257 aa)). Residues 277 to 285 (IGSGQFGVV) and lysine 299 each bind ATP. The Proton acceptor role is filled by aspartate 390. Position 420 is a phosphotyrosine; by FYN and autocatalysis (tyrosine 420).

Belongs to the protein kinase superfamily. Tyr protein kinase family. TEC subfamily. Interacts with PARP1 and EEF1A1. Interacts with SH2D2A. Interacts with FYN. Post-translationally, phosphorylated at Tyr-420 by FYN. Autophosphorylation at Tyr-91 is critical for the activation of TXK, leading to the up-regulation of IFN-gamma gene transcription. In terms of processing, the cysteine string at the N-terminus is palmitoylated and required for the proper subcellular location. As to expression, expressed in T-cells and some myeloid cell lines. Expressed in Th1/Th0 cells with IFN-gamma-producing potential.

The protein localises to the cytoplasm. It localises to the nucleus. It is found in the cell membrane. It carries out the reaction L-tyrosyl-[protein] + ATP = O-phospho-L-tyrosyl-[protein] + ADP + H(+). With respect to regulation, activated by phosphorylation by FYN. Its function is as follows. Non-receptor tyrosine kinase that plays a redundant role with ITK in regulation of the adaptive immune response. Regulates the development, function and differentiation of conventional T-cells and nonconventional NKT-cells. When antigen presenting cells (APC) activate T-cell receptor (TCR), a series of phosphorylation leads to the recruitment of TXK to the cell membrane, where it is phosphorylated at Tyr-420. Phosphorylation leads to TXK full activation. Also contributes to signaling from many receptors and participates in multiple downstream pathways, including regulation of the actin cytoskeleton. Like ITK, can phosphorylate PLCG1, leading to its localization in lipid rafts and activation, followed by subsequent cleavage of its substrates. In turn, the endoplasmic reticulum releases calcium in the cytoplasm and the nuclear activator of activated T-cells (NFAT) translocates into the nucleus to perform its transcriptional duty. Plays a role in the positive regulation of IFNG transcription in T-helper 1 cells as part of an IFNG promoter-binding complex with PARP1 and EEF1A1. Within the complex, phosphorylates both PARP1 and EEF1A1. Also phosphorylates key sites in LCP2 leading to the up-regulation of Th1 preferred cytokine IL-2. Phosphorylates 'Tyr-201' of CTLA4 which leads to the association of PI-3 kinase with the CTLA4 receptor. The protein is Tyrosine-protein kinase TXK (TXK) of Homo sapiens (Human).